A 554-amino-acid polypeptide reads, in one-letter code: Calcium/calmodulin-dependent protein kinase type II delta 2 chain (554 aa).

Positions 13-271 (YQLFEELGKG…AAEAPKHPWI (259 aa)) constitute a Protein kinase domain. Residues 19 to 27 (LGKGAFSVV) and lysine 42 contribute to the ATP site. Aspartate 135 (proton acceptor) is an active-site residue. Position 286 is a phosphothreonine (threonine 286). Phosphoserine is present on residues serine 314 and serine 318. 2 disordered regions span residues 324 to 375 (PDGV…TIED) and 392 to 413 (WQPSVGRPQNSEPKQAPNSSVQ). A compositionally biased stretch (polar residues) spans 330-340 (NNKTNLASSPK). At threonine 372 the chain carries Phosphothreonine.

This sequence belongs to the protein kinase superfamily. CAMK Ser/Thr protein kinase family. CaMK subfamily. As to quaternary structure, CAMK2 is composed of four different chains: alpha, beta, gamma, and delta. The different isoforms assemble into homo- or heteromultimeric holoenzymes composed of 8 to 12 subunits. In terms of tissue distribution, first detected at 18 hpf. At 24 hpf, expressed in discrete anterior locations and along either side of the midline. At 48 hpf, expression is predominantly in the forebrain, and then accumulates in the forebrain, hindbrain, and retinal epithelium at 72 hpf.

The enzyme catalyses L-seryl-[protein] + ATP = O-phospho-L-seryl-[protein] + ADP + H(+). It carries out the reaction L-threonyl-[protein] + ATP = O-phospho-L-threonyl-[protein] + ADP + H(+). Autophosphorylation of CAMK2 plays an important role in the regulation of the kinase activity. Functionally, caM-kinase II (CAMK2) is a prominent kinase in the central nervous system. This chain is Calcium/calmodulin-dependent protein kinase type II delta 2 chain (camk2d2), found in Danio rerio (Zebrafish).